A 27-amino-acid polypeptide reads, in one-letter code: Cupiennin-3a (27 aa).

A Glutamic acid 1-amide modification is found at Glu-27.

As to expression, expressed by the venom gland.

It localises to the secreted. In Cupiennius salei (American wandering spider), this protein is Cupiennin-3a.